Consider the following 556-residue polypeptide: 2-succinyl-5-enolpyruvyl-6-hydroxy-3-cyclohexene-1-carboxylate synthase (556 aa).

It belongs to the TPP enzyme family. MenD subfamily. Homodimer. The cofactor is Mg(2+). Mn(2+) is required as a cofactor. Requires thiamine diphosphate as cofactor.

The enzyme catalyses isochorismate + 2-oxoglutarate + H(+) = 5-enolpyruvoyl-6-hydroxy-2-succinyl-cyclohex-3-ene-1-carboxylate + CO2. It participates in quinol/quinone metabolism; 1,4-dihydroxy-2-naphthoate biosynthesis; 1,4-dihydroxy-2-naphthoate from chorismate: step 2/7. It functions in the pathway quinol/quinone metabolism; menaquinone biosynthesis. Catalyzes the thiamine diphosphate-dependent decarboxylation of 2-oxoglutarate and the subsequent addition of the resulting succinic semialdehyde-thiamine pyrophosphate anion to isochorismate to yield 2-succinyl-5-enolpyruvyl-6-hydroxy-3-cyclohexene-1-carboxylate (SEPHCHC). The protein is 2-succinyl-5-enolpyruvyl-6-hydroxy-3-cyclohexene-1-carboxylate synthase of Salmonella arizonae (strain ATCC BAA-731 / CDC346-86 / RSK2980).